We begin with the raw amino-acid sequence, 188 residues long: GTPase KRas (188 aa).

An N-acetylmethionine modification is found at Met-1. Thr-2 is subject to N-acetylthreonine; in GTPase KRas, N-terminally processed. GTP contacts are provided by residues 10-18 (GAGGVGKSA), 29-35 (VDEYDPT), and 59-60 (AG). The Effector region motif lies at 32–40 (YDPTIEDSY). Lys-104 is subject to N6-acetyllysine. 116-119 (NKCD) is a GTP binding site. Positions 166-185 (HKEKMSKDGKKKKKKSKTKC) are hypervariable region. A disordered region spans residues 167 to 188 (KEKMSKDGKKKKKKSKTKCIIM). Cys-185 carries the post-translational modification Cysteine methyl ester. The S-farnesyl cysteine moiety is linked to residue Cys-185. The propeptide at 186 to 188 (IIM) is removed in mature form.

This sequence belongs to the small GTPase superfamily. Ras family. In terms of assembly, interacts with PHLPP. Interacts (active GTP-bound form preferentially) with RGS14. Interacts (when farnesylated) with PDE6D; this promotes dissociation from the cell membrane. Interacts with SOS1. Interacts (when farnesylated) with GPR31. Interacts with RAP1GDS1. Interacts (active GTP-bound form) with both SHOC2 and PP1c (all isoforms) to form a tertiary complex; SHOC2 and PP1c preferably bind M-Ras/MRAS, but they also bind K-Ras/KRAS, N-Ras/NRAS and H-Ras/HRAS. Interacts (GTP-bound form) with MAPKAP1/SIN1; inhibiting K-Ras/KRAS activity. In terms of processing, acetylation at Lys-104 prevents interaction with guanine nucleotide exchange factors (GEFs).

It is found in the cell membrane. Its subcellular location is the cytoplasm. The protein resides in the cytosol. It catalyses the reaction GTP + H2O = GDP + phosphate + H(+). Its activity is regulated as follows. Alternates between an inactive form bound to GDP and an active form bound to GTP. Activated by a guanine nucleotide-exchange factor (GEF) and inactivated by a GTPase-activating protein (GAP). Interaction with SOS1 promotes exchange of bound GDP to GTP. Functionally, ras proteins bind GDP/GTP and possess intrinsic GTPase activity. Plays an important role in the regulation of cell proliferation. Plays a role in promoting oncogenic events by inducing transcriptional silencing of tumor suppressor genes (TSGs) in colorectal cancer (CRC) cells in a ZNF304-dependent manner. The polypeptide is GTPase KRas (KRAS) (Monodelphis domestica (Gray short-tailed opossum)).